Here is a 460-residue protein sequence, read N- to C-terminus: Trigger factor (460 aa).

A PPIase FKBP-type domain is found at 166 to 245; it reads DDFLTIDITA…VKAVKERELP (80 aa). The tract at residues 434-460 is disordered; it reads AAEEAAAGEANEEADVVASDDPAAVKF. Residues 449–460 show a composition bias toward low complexity; that stretch reads VVASDDPAAVKF.

It belongs to the FKBP-type PPIase family. Tig subfamily.

It localises to the cytoplasm. The enzyme catalyses [protein]-peptidylproline (omega=180) = [protein]-peptidylproline (omega=0). Its function is as follows. Involved in protein export. Acts as a chaperone by maintaining the newly synthesized protein in an open conformation. Functions as a peptidyl-prolyl cis-trans isomerase. The polypeptide is Trigger factor (Paenarthrobacter aurescens (strain TC1)).